We begin with the raw amino-acid sequence, 275 residues long: 2-dehydro-3-deoxyphosphooctonate aldolase (275 aa).

It belongs to the KdsA family.

It localises to the cytoplasm. The enzyme catalyses D-arabinose 5-phosphate + phosphoenolpyruvate + H2O = 3-deoxy-alpha-D-manno-2-octulosonate-8-phosphate + phosphate. It functions in the pathway carbohydrate biosynthesis; 3-deoxy-D-manno-octulosonate biosynthesis; 3-deoxy-D-manno-octulosonate from D-ribulose 5-phosphate: step 2/3. Its pathway is bacterial outer membrane biogenesis; lipopolysaccharide biosynthesis. This Francisella tularensis subsp. holarctica (strain LVS) protein is 2-dehydro-3-deoxyphosphooctonate aldolase.